Consider the following 138-residue polypeptide: Phosphoribosyl-AMP cyclohydrolase (138 aa).

Asp-84 lines the Mg(2+) pocket. Position 85 (Cys-85) interacts with Zn(2+). Positions 86 and 88 each coordinate Mg(2+). Cys-102 and Cys-109 together coordinate Zn(2+).

Belongs to the PRA-CH family. In terms of assembly, homodimer. Requires Mg(2+) as cofactor. Zn(2+) is required as a cofactor.

Its subcellular location is the cytoplasm. It carries out the reaction 1-(5-phospho-beta-D-ribosyl)-5'-AMP + H2O = 1-(5-phospho-beta-D-ribosyl)-5-[(5-phospho-beta-D-ribosylamino)methylideneamino]imidazole-4-carboxamide. The protein operates within amino-acid biosynthesis; L-histidine biosynthesis; L-histidine from 5-phospho-alpha-D-ribose 1-diphosphate: step 3/9. In terms of biological role, catalyzes the hydrolysis of the adenine ring of phosphoribosyl-AMP. In Burkholderia orbicola (strain MC0-3), this protein is Phosphoribosyl-AMP cyclohydrolase.